The primary structure comprises 341 residues: MNIEEFDYDLPESLIAQTPLKDRDHSRLLVMDRETGEMKHLHFKDIIEYFRPGDTLVLNDTRVMPARLFGLKEETGAKVEMLMLTQIEGNDWEVLLKPAKRIKVGNKLNFGNGKIIAECIKEMDQGGRIMRLHYEGILQERLDELGEMPLPPYIKERLDDPDRYQTVYAKESGSAAAPTAGLHFTDELLIEIKNKGVNIAFVTLHVGLGTFRPVSVDDVNDHEMHSEYYQMTQETADLLNDTKSKGHRIISVGTTSTRTLETIRRDHDKFVETSGWTNIFIYPGFDFKAIDGQITNFHLPKSTLVMLVSAFSSRENVLNAYKTAVNLEYRFFSFGDAMLII.

It belongs to the QueA family. As to quaternary structure, monomer.

It localises to the cytoplasm. The catalysed reaction is 7-aminomethyl-7-carbaguanosine(34) in tRNA + S-adenosyl-L-methionine = epoxyqueuosine(34) in tRNA + adenine + L-methionine + 2 H(+). It functions in the pathway tRNA modification; tRNA-queuosine biosynthesis. Its function is as follows. Transfers and isomerizes the ribose moiety from AdoMet to the 7-aminomethyl group of 7-deazaguanine (preQ1-tRNA) to give epoxyqueuosine (oQ-tRNA). The chain is S-adenosylmethionine:tRNA ribosyltransferase-isomerase from Staphylococcus aureus (strain USA300).